Here is a 505-residue protein sequence, read N- to C-terminus: SusD-like protein P2 (505 aa).

The signal sequence occupies residues 1 to 17; the sequence is MKKYKITFIVLLLTLVG. Residue C18 is the site of N-palmitoyl cysteine attachment. Residue C18 is the site of S-diacylglycerol cysteine attachment.

This sequence belongs to the SusD family.

It localises to the cell outer membrane. Polysaccharide-binding protein probably involved in ulvan degradation. Ulvan is the main polysaccharide component of the Ulvales (green seaweed) cell wall. It is composed of disaccharide building blocks comprising 3-sulfated rhamnose (Rha3S) linked to D-glucuronic acid (GlcA), L-iduronic acid (IduA), or D-xylose (Xyl). The SusD-like protein may mediate ulvan oligomer-binding before transport in the periplasm for further degradation. The chain is SusD-like protein P2 from Formosa agariphila (strain DSM 15362 / KCTC 12365 / LMG 23005 / KMM 3901 / M-2Alg 35-1).